The primary structure comprises 944 residues: Putative ATP-dependent RNA helicase (944 aa).

In terms of domain architecture, Helicase ATP-binding spans 66-235 (TTPRSPIDGI…VPLHNLLMKL (170 aa)). 79-86 (HGVGTGKT) lines the ATP pocket. Residues 183 to 186 (DEAH) carry the DEAH box motif. In terms of domain architecture, Helicase C-terminal spans 451 to 523 (CLTREVMTVP…QIIGRGIRYQ (73 aa)).

This sequence belongs to the DEAD box helicase family. DEAH subfamily.

The enzyme catalyses ATP + H2O = ADP + phosphate + H(+). The protein is Putative ATP-dependent RNA helicase of Heliothis virescens ascovirus 3e (HvAV-3e).